A 213-amino-acid chain; its full sequence is Probable nicotinate-nucleotide adenylyltransferase (213 aa).

This sequence belongs to the NadD family.

The catalysed reaction is nicotinate beta-D-ribonucleotide + ATP + H(+) = deamido-NAD(+) + diphosphate. It participates in cofactor biosynthesis; NAD(+) biosynthesis; deamido-NAD(+) from nicotinate D-ribonucleotide: step 1/1. Functionally, catalyzes the reversible adenylation of nicotinate mononucleotide (NaMN) to nicotinic acid adenine dinucleotide (NaAD). The protein is Probable nicotinate-nucleotide adenylyltransferase of Pectobacterium atrosepticum (strain SCRI 1043 / ATCC BAA-672) (Erwinia carotovora subsp. atroseptica).